The chain runs to 406 residues: Argininosuccinate synthase (406 aa).

ATP-binding positions include 12–20 (AYSGGLDTS) and Ala-40. The L-citrulline site is built by Tyr-92 and Ser-97. Gly-122 contacts ATP. Positions 124, 128, and 129 each coordinate L-aspartate. Asn-128 contributes to the L-citrulline binding site. Arg-132, Ser-181, Ser-190, Glu-266, and Tyr-278 together coordinate L-citrulline.

It belongs to the argininosuccinate synthase family. Type 1 subfamily. In terms of assembly, homotetramer.

It is found in the cytoplasm. The enzyme catalyses L-citrulline + L-aspartate + ATP = 2-(N(omega)-L-arginino)succinate + AMP + diphosphate + H(+). It functions in the pathway amino-acid biosynthesis; L-arginine biosynthesis; L-arginine from L-ornithine and carbamoyl phosphate: step 2/3. In Serratia proteamaculans (strain 568), this protein is Argininosuccinate synthase.